Here is a 593-residue protein sequence, read N- to C-terminus: DNA primase (593 aa).

Residues 38-62 (CPFHQEKTPSFTVSDSKRFFYCFGC) form a CHC2-type zinc finger. The Toprim domain occupies 250 to 332 (NRSILVEGYF…EKKISFIRLP (83 aa)). Glu256, Asp300, and Asp302 together coordinate Mg(2+).

This sequence belongs to the DnaG primase family. In terms of assembly, monomer. Interacts with DnaB. Zn(2+) is required as a cofactor. It depends on Mg(2+) as a cofactor.

It catalyses the reaction ssDNA + n NTP = ssDNA/pppN(pN)n-1 hybrid + (n-1) diphosphate.. In terms of biological role, RNA polymerase that catalyzes the synthesis of short RNA molecules used as primers for DNA polymerase during DNA replication. The protein is DNA primase of Rickettsia prowazekii (strain Madrid E).